Reading from the N-terminus, the 482-residue chain is Glutamate--tRNA ligase (482 aa).

Positions 9–19 (PSPTGYLHIGG) match the 'HIGH' region motif. Positions 252–256 (KLSKR) match the 'KMSKS' region motif. An ATP-binding site is contributed by Lys255.

Belongs to the class-I aminoacyl-tRNA synthetase family. Glutamate--tRNA ligase type 1 subfamily. As to quaternary structure, monomer.

It localises to the cytoplasm. It catalyses the reaction tRNA(Glu) + L-glutamate + ATP = L-glutamyl-tRNA(Glu) + AMP + diphosphate. Functionally, catalyzes the attachment of glutamate to tRNA(Glu) in a two-step reaction: glutamate is first activated by ATP to form Glu-AMP and then transferred to the acceptor end of tRNA(Glu). The sequence is that of Glutamate--tRNA ligase from Ureaplasma urealyticum serovar 10 (strain ATCC 33699 / Western).